The primary structure comprises 336 residues: Fructose-1,6-bisphosphatase class 1 (336 aa).

Residues Glu-90, Asp-112, Leu-114, and Asp-115 each coordinate Mg(2+). Residues 115–118, Asn-211, and Lys-277 each bind substrate; that span reads DGSS. Position 283 (Glu-283) interacts with Mg(2+).

It belongs to the FBPase class 1 family. Homotetramer. Requires Mg(2+) as cofactor.

It localises to the cytoplasm. The catalysed reaction is beta-D-fructose 1,6-bisphosphate + H2O = beta-D-fructose 6-phosphate + phosphate. Its pathway is carbohydrate biosynthesis; gluconeogenesis. This is Fructose-1,6-bisphosphatase class 1 from Pseudomonas paraeruginosa (strain DSM 24068 / PA7) (Pseudomonas aeruginosa (strain PA7)).